Here is a 218-residue protein sequence, read N- to C-terminus: Small ribosomal subunit protein uS3 (218 aa).

Methionine 1 carries the post-translational modification N-acetylmethionine. The 73-residue stretch at 23-95 folds into the KH type-2 domain; sequence LNELFTREFN…TVVLFAEKIL (73 aa).

Belongs to the universal ribosomal protein uS3 family.

The protein is Small ribosomal subunit protein uS3 (rps3) of Dictyostelium discoideum (Social amoeba).